The chain runs to 91 residues: Small integral membrane protein 12-A (91 aa).

The helical transmembrane segment at 12–34 threads the bilayer; that stretch reads YAPYITFPVAFVVGAVGYQLEWF.

The protein belongs to the SMIM12 family.

The protein localises to the membrane. This is Small integral membrane protein 12-A (smim12-a) from Xenopus laevis (African clawed frog).